Reading from the N-terminus, the 304-residue chain is Methionyl-tRNA formyltransferase (304 aa).

111–114 (SLLP) lines the (6S)-5,6,7,8-tetrahydrofolate pocket.

It belongs to the Fmt family.

The enzyme catalyses L-methionyl-tRNA(fMet) + (6R)-10-formyltetrahydrofolate = N-formyl-L-methionyl-tRNA(fMet) + (6S)-5,6,7,8-tetrahydrofolate + H(+). Its function is as follows. Attaches a formyl group to the free amino group of methionyl-tRNA(fMet). The formyl group appears to play a dual role in the initiator identity of N-formylmethionyl-tRNA by promoting its recognition by IF2 and preventing the misappropriation of this tRNA by the elongation apparatus. In Campylobacter fetus subsp. fetus (strain 82-40), this protein is Methionyl-tRNA formyltransferase.